Consider the following 378-residue polypeptide: Glutamate 5-kinase (378 aa).

An ATP-binding site is contributed by Lys-14. Substrate contacts are provided by Ser-54, Asp-141, and Asn-153. Residue 173-174 (SD) participates in ATP binding. Residues 279–356 (AGRLTVDAGA…DEISAILGYD (78 aa)) enclose the PUA domain.

It belongs to the glutamate 5-kinase family.

It is found in the cytoplasm. It carries out the reaction L-glutamate + ATP = L-glutamyl 5-phosphate + ADP. It participates in amino-acid biosynthesis; L-proline biosynthesis; L-glutamate 5-semialdehyde from L-glutamate: step 1/2. Its function is as follows. Catalyzes the transfer of a phosphate group to glutamate to form L-glutamate 5-phosphate. This chain is Glutamate 5-kinase, found in Brucella abortus (strain S19).